A 633-amino-acid polypeptide reads, in one-letter code: Chaperone protein dnaK2 (633 aa).

The residue at position 197 (threonine 197) is a Phosphothreonine; by autocatalysis. The span at 513–532 shows a compositional bias: basic and acidic residues; the sequence is AEQNASSDKERREKIERKNQ. Disordered stretches follow at residues 513–534 and 598–633; these read AEQNASSDKERREKIERKNQAD and QQAGGGAAPGAAPQDGGTTSSDGGDDVIDADFTETK. A compositionally biased stretch (low complexity) spans 606-619; sequence PGAAPQDGGTTSSD. Positions 620–633 are enriched in acidic residues; that stretch reads GGDDVIDADFTETK.

It belongs to the heat shock protein 70 family.

Acts as a chaperone. This Nostoc sp. (strain PCC 7120 / SAG 25.82 / UTEX 2576) protein is Chaperone protein dnaK2 (dnaK2).